The sequence spans 473 residues: UDP-N-acetylmuramate--L-alanine ligase (473 aa).

An ATP-binding site is contributed by 123–129 (GTHGKTT).

Belongs to the MurCDEF family.

The protein resides in the cytoplasm. It catalyses the reaction UDP-N-acetyl-alpha-D-muramate + L-alanine + ATP = UDP-N-acetyl-alpha-D-muramoyl-L-alanine + ADP + phosphate + H(+). It participates in cell wall biogenesis; peptidoglycan biosynthesis. Cell wall formation. This chain is UDP-N-acetylmuramate--L-alanine ligase, found in Marinomonas sp. (strain MWYL1).